The chain runs to 210 residues: Redox-sensing transcriptional repressor Rex (210 aa).

A DNA-binding region (H-T-H motif) is located at residues 15-54 (LYYRIFKRFNTDGIEKASSKQIADALGIDSATVRRDFSYF). 89–94 (GCGNIG) contributes to the NAD(+) binding site.

This sequence belongs to the transcriptional regulatory Rex family. As to quaternary structure, homodimer.

Its subcellular location is the cytoplasm. In terms of biological role, modulates transcription in response to changes in cellular NADH/NAD(+) redox state. The protein is Redox-sensing transcriptional repressor Rex of Streptococcus agalactiae serotype Ia (strain ATCC 27591 / A909 / CDC SS700).